The chain runs to 307 residues: Protein Y (307 aa).

It belongs to the ATP-dependent AMP-binding enzyme family.

Its pathway is antibiotic biosynthesis; candicidin biosynthesis. May be a p-aminobenzoic acid-CoA ligase that activates PabA to start the biosynthesis of candicidin. This Streptomyces griseus protein is Protein Y.